A 385-amino-acid chain; its full sequence is Glycerol-3-phosphate dehydrogenase [NAD(+)] 1 (385 aa).

Residues 29–34, Phe121, Lys144, and Ala177 each bind NAD(+); that span reads GSGNWG. Lys144 serves as a coordination point for substrate. Residue Lys232 is the Proton acceptor of the active site. NAD(+) contacts are provided by Arg296 and Gln325. Residue 296-297 coordinates substrate; it reads RN. Ser376 is modified (phosphoserine). Thr382 carries the post-translational modification Phosphothreonine.

It belongs to the NAD-dependent glycerol-3-phosphate dehydrogenase family.

The protein localises to the cytoplasm. The catalysed reaction is sn-glycerol 3-phosphate + NAD(+) = dihydroxyacetone phosphate + NADH + H(+). This is Glycerol-3-phosphate dehydrogenase [NAD(+)] 1 (gpd1) from Schizosaccharomyces pombe (strain 972 / ATCC 24843) (Fission yeast).